Here is an 886-residue protein sequence, read N- to C-terminus: Alanine--tRNA ligase (886 aa).

Positions 564, 568, 666, and 670 each coordinate Zn(2+).

It belongs to the class-II aminoacyl-tRNA synthetase family. Zn(2+) serves as cofactor.

It localises to the cytoplasm. It catalyses the reaction tRNA(Ala) + L-alanine + ATP = L-alanyl-tRNA(Ala) + AMP + diphosphate. Its function is as follows. Catalyzes the attachment of alanine to tRNA(Ala) in a two-step reaction: alanine is first activated by ATP to form Ala-AMP and then transferred to the acceptor end of tRNA(Ala). Also edits incorrectly charged Ser-tRNA(Ala) and Gly-tRNA(Ala) via its editing domain. This chain is Alanine--tRNA ligase, found in Prochlorococcus marinus (strain MIT 9301).